Here is a 331-residue protein sequence, read N- to C-terminus: Ketol-acid reductoisomerase (NADP(+)) (331 aa).

A KARI N-terminal Rossmann domain is found at T2–T181. Residues Y25 to Q28, R48, S52, and D82 to Q85 each bind NADP(+). H107 is a catalytic residue. G133 contacts NADP(+). A KARI C-terminal knotted domain is found at T182 to V327. Residues D190, E194, E226, and E230 each contribute to the Mg(2+) site. A substrate-binding site is contributed by S251.

This sequence belongs to the ketol-acid reductoisomerase family. It depends on Mg(2+) as a cofactor.

It carries out the reaction (2R)-2,3-dihydroxy-3-methylbutanoate + NADP(+) = (2S)-2-acetolactate + NADPH + H(+). It catalyses the reaction (2R,3R)-2,3-dihydroxy-3-methylpentanoate + NADP(+) = (S)-2-ethyl-2-hydroxy-3-oxobutanoate + NADPH + H(+). The protein operates within amino-acid biosynthesis; L-isoleucine biosynthesis; L-isoleucine from 2-oxobutanoate: step 2/4. Its pathway is amino-acid biosynthesis; L-valine biosynthesis; L-valine from pyruvate: step 2/4. In terms of biological role, involved in the biosynthesis of branched-chain amino acids (BCAA). Catalyzes an alkyl-migration followed by a ketol-acid reduction of (S)-2-acetolactate (S2AL) to yield (R)-2,3-dihydroxy-isovalerate. In the isomerase reaction, S2AL is rearranged via a Mg-dependent methyl migration to produce 3-hydroxy-3-methyl-2-ketobutyrate (HMKB). In the reductase reaction, this 2-ketoacid undergoes a metal-dependent reduction by NADPH to yield (R)-2,3-dihydroxy-isovalerate. This chain is Ketol-acid reductoisomerase (NADP(+)), found in Listeria innocua serovar 6a (strain ATCC BAA-680 / CLIP 11262).